Reading from the N-terminus, the 229-residue chain is Large ribosomal subunit protein uL1 (229 aa).

It belongs to the universal ribosomal protein uL1 family. Part of the 50S ribosomal subunit.

In terms of biological role, binds directly to 23S rRNA. The L1 stalk is quite mobile in the ribosome, and is involved in E site tRNA release. Functionally, protein L1 is also a translational repressor protein, it controls the translation of the L11 operon by binding to its mRNA. This is Large ribosomal subunit protein uL1 from Gemmatimonas aurantiaca (strain DSM 14586 / JCM 11422 / NBRC 100505 / T-27).